A 417-amino-acid polypeptide reads, in one-letter code: Mitochondrial inner membrane i-AAA protease supercomplex subunit MGR1 (417 aa).

Residues 1–28 (MAVFTPPSGNSNSTDHTHTQDDHDKDDN) form a disordered region. The Mitochondrial intermembrane portion of the chain corresponds to 1–56 (MAVFTPPSGNSNSTDHTHTQDDHDKDDNDIKKFYIRPSLGLKLWGPLVPAPDNLPG). The span at 15–28 (DHTHTQDDHDKDDN) shows a compositional bias: basic and acidic residues. Residues 57-73 (LYTLITIQSAVGFFALW) traverse the membrane as a helical segment. Residues 74–151 (RLRRLYKLPP…RQSRFVSVRK (78 aa)) lie on the Mitochondrial matrix side of the membrane. The chain crosses the membrane as a helical span at residues 152–169 (LLWGLFGSLLLSQSLLEL). The Mitochondrial intermembrane segment spans residues 170–417 (TRLNFLKYDP…PKALTNEKTH (248 aa)). Polar residues predominate over residues 391–401 (SHTKTPTSTDQ). Residues 391–417 (SHTKTPTSTDQPLPGPTPKALTNEKTH) are disordered.

Belongs to the MGR1 family. In terms of assembly, component of the mitochondrial inner membrane i-AAA protease supercomplex composed of MGR1, MGR3 and YME1. With MGR3, forms a subcomplex that binds to YME1 and to substrates to facilitate proteolysis. Interacts directly with YME1.

The protein resides in the mitochondrion inner membrane. Its function is as follows. Component of the mitochondrial inner membrane i-AAA protease supercomplex required for mitochondrial inner membrane protein turnover. Together with MGR3, functions in an adapter complex that targets substrates to the i-AAA protease for degradation. Required for growth of cells lacking the mitochondrial genome. The protein is Mitochondrial inner membrane i-AAA protease supercomplex subunit MGR1 (MGR1) of Saccharomyces cerevisiae (strain ATCC 204508 / S288c) (Baker's yeast).